The chain runs to 317 residues: MEDSSNTIIPSPTDVGALANRINFQTRDAHNKINTFMGIKMAIAMRHGFIYRQGILAYYYVFDAIEQEIDRLLNDPVTEEELQTSTILKQFWLEDFRRSTQIYKDLKLLYSNTFKSTESLNEFLATFQKPPLLQQFINNIHENIHKEPCTILSYCHVLYLALFAGGKLIRSNLYRRLGLFPNFEKLSQKELVKKGTNFFTFSDLGPTEETRLKWEYKKNYELATRTELTEAQKLQIISVAEGIFDWNFNIVAEIGELNRRELMGKFSFKCITYLYEEWMFNKDSATRRALHTVMLLVLSIIAIWVLYFLVKSFLSIV.

At 1–289 (MEDSSNTIIP…FNKDSATRRA (289 aa)) the chain is on the cytoplasmic side. The chain crosses the membrane as a helical; Anchor for type IV membrane protein span at residues 290 to 310 (LHTVMLLVLSIIAIWVLYFLV).

It depends on heme as a cofactor.

It is found in the endoplasmic reticulum membrane. In terms of biological role, plays an important role in the degradation of heme under conditions of iron deprivation. The chain is Heme-binding protein HMX1 (HMX1) from Saccharomyces cerevisiae (strain ATCC 204508 / S288c) (Baker's yeast).